A 372-amino-acid chain; its full sequence is DNA replication and repair protein RecF (372 aa).

ATP is bound at residue 30–37; that stretch reads GENAQGKT.

This sequence belongs to the RecF family.

The protein localises to the cytoplasm. The RecF protein is involved in DNA metabolism; it is required for DNA replication and normal SOS inducibility. RecF binds preferentially to single-stranded, linear DNA. It also seems to bind ATP. The sequence is that of DNA replication and repair protein RecF from Exiguobacterium sp. (strain ATCC BAA-1283 / AT1b).